Here is a 547-residue protein sequence, read N- to C-terminus: Chaperonin GroEL (547 aa).

ATP contacts are provided by residues 30–33 (TLGP), Lys51, 87–91 (DGTTT), Gly416, 480–482 (NAA), and Asp496.

It belongs to the chaperonin (HSP60) family. Forms a cylinder of 14 subunits composed of two heptameric rings stacked back-to-back. Interacts with the co-chaperonin GroES.

The protein localises to the cytoplasm. The enzyme catalyses ATP + H2O + a folded polypeptide = ADP + phosphate + an unfolded polypeptide.. In terms of biological role, together with its co-chaperonin GroES, plays an essential role in assisting protein folding. The GroEL-GroES system forms a nano-cage that allows encapsulation of the non-native substrate proteins and provides a physical environment optimized to promote and accelerate protein folding. This chain is Chaperonin GroEL, found in Pseudoalteromonas translucida (strain TAC 125).